The sequence spans 470 residues: L-seryl-tRNA(Sec) selenium transferase (470 aa).

An N6-(pyridoxal phosphate)lysine modification is found at K294.

Belongs to the SelA family. It depends on pyridoxal 5'-phosphate as a cofactor.

The protein resides in the cytoplasm. It catalyses the reaction L-seryl-tRNA(Sec) + selenophosphate + H(+) = L-selenocysteinyl-tRNA(Sec) + phosphate. It participates in aminoacyl-tRNA biosynthesis; selenocysteinyl-tRNA(Sec) biosynthesis; selenocysteinyl-tRNA(Sec) from L-seryl-tRNA(Sec) (bacterial route): step 1/1. Its function is as follows. Converts seryl-tRNA(Sec) to selenocysteinyl-tRNA(Sec) required for selenoprotein biosynthesis. This Solidesulfovibrio magneticus (strain ATCC 700980 / DSM 13731 / RS-1) (Desulfovibrio magneticus) protein is L-seryl-tRNA(Sec) selenium transferase.